Here is a 589-residue protein sequence, read N- to C-terminus: Deoxynucleoside triphosphate triphosphohydrolase SAMHD1 (589 aa).

The residue at position 1 (Met-1) is an N-acetylmethionine. A compositionally biased stretch (polar residues) spans 1–10 (MQSADSQNTP). Positions 1–41 (MQSADSQNTPKRPRRDGSPRTPPDSPLADAETSPSHDLDPD) are disordered. Ser-18 carries the post-translational modification Phosphoserine. At Thr-21 the chain carries Phosphothreonine. 2 positions are modified to phosphoserine: Ser-33 and Ser-88. Residues 45-100 (WGPEQVWSFLRRCGFSDSELLKRCREKRMSGSLLPFPEDLGISSHGKKMKLLNCIQ) form the SAM domain. Residues Lys-104 and Val-105 each contribute to the GTP site. Position 107 (Asn-107) interacts with dGTP. GTP contacts are provided by Asp-125, Gln-130, and Arg-133. Residues Gln-137, Leu-138, Val-144, and Arg-152 each coordinate dGTP. DATP is bound at residue Gln-137. Residue Gln-137 coordinates dCTP. Position 137 (Gln-137) interacts with dTTP. Residue Arg-152 coordinates dATP. DCTP is bound at residue Arg-152. Arg-152 is a binding site for dTTP. The HD domain occupies 152–277 (RFEHSLGVGY…IKDASKWLYK (126 aa)). Mn(2+) is bound by residues His-155, His-194, and Asp-195. 2 residues coordinate dATP: His-198 and His-203. DCTP contacts are provided by His-198 and His-203. Residues His-198 and His-203 each coordinate dTTP. The active site involves His-221. Asp-300 provides a ligand contact to Mn(2+). Residues Lys-301, Tyr-304, Asp-308, Arg-322, Arg-341, Lys-343, Asn-347, Arg-355, Tyr-363, Gln-364, His-365, and Lys-366 each contribute to the dGTP site. DATP-binding residues include Lys-301, Tyr-304, and Asp-308. Residues Lys-301, Tyr-304, and Asp-308 each contribute to the dCTP site. Residues Lys-301, Tyr-304, and Asp-308 each contribute to the dTTP site. Position 355 (Arg-355) interacts with dATP. Arg-355 serves as a coordination point for dCTP. Gln-364 contacts dATP. A dCTP-binding site is contributed by Gln-364. A dTTP-binding site is contributed by Gln-364. Positions 440 and 444 each coordinate GTP. Lys-457 participates in a covalent cross-link: Glycyl lysine isopeptide (Lys-Gly) (interchain with G-Cter in SUMO2). Lys-512 is a binding site for GTP. Lys-512 serves as a coordination point for dGTP.

This sequence belongs to the SAMHD1 family. As to quaternary structure, homodimer; in absence of GTP and dNTP. Homotetramer; in GTP- and dNTP-bound form. Interacts with MRE11; leading to stimulate the exonuclease activity of MRE11. Interacts with RBBP8/CtIP. Interacts (via its C-terminus) with CD81. The cofactor is Zn(2+).

It is found in the nucleus. The protein resides in the chromosome. The catalysed reaction is a 2'-deoxyribonucleoside 5'-triphosphate + H2O = a 2'-deoxyribonucleoside + triphosphate + H(+). It carries out the reaction dATP + H2O = 2'-deoxyadenosine + triphosphate + H(+). The enzyme catalyses dCTP + H2O = 2'-deoxycytidine + triphosphate + H(+). It catalyses the reaction dGTP + H2O = 2'-deoxyguanosine + triphosphate + H(+). The catalysed reaction is dTTP + H2O = thymidine + triphosphate + H(+). With respect to regulation, allosterically activated and regulated via the combined actions of GTP and dNTPs (dATP, dGTP, dTTP and dCTP): Allosteric site 1 binds GTP, while allosteric site 2 binds dNTP. Allosteric activation promotes the formation of highly active homotetramers. Its function is as follows. Protein that acts both as a host restriction factor involved in defense response to virus and as a regulator of DNA end resection at stalled replication forks. Has deoxynucleoside triphosphate (dNTPase) activity, which is required to restrict infection by viruses: dNTPase activity reduces cellular dNTP levels to levels too low for retroviral reverse transcription to occur, blocking early-stage virus replication in dendritic and other myeloid cells. Likewise, suppresses LINE-1 retrotransposon activity. In addition to virus restriction, dNTPase activity acts as a regulator of DNA precursor pools by regulating dNTP pools. Functions during S phase at stalled DNA replication forks to promote the resection of gapped or reversed forks: acts by stimulating the exonuclease activity of MRE11, activating the ATR-CHK1 pathway and allowing the forks to restart replication. Its ability to promote degradation of nascent DNA at stalled replication forks is required to prevent induction of type I interferons, thereby preventing chronic inflammation. Ability to promote DNA end resection at stalled replication forks is independent of dNTPase activity. Enhances immunoglobulin hypermutation in B-lymphocytes by promoting transversion mutation. In Bos taurus (Bovine), this protein is Deoxynucleoside triphosphate triphosphohydrolase SAMHD1.